Reading from the N-terminus, the 152-residue chain is Transcriptional repressor NrdR (152 aa).

A zinc finger lies at 3–33 (CSICKKGETSVVDSRPTEDGTAIRRRRLCVC). The ATP-cone domain maps to 48 to 138 (IMVVKKNGRK…VYRNFREEKD (91 aa)).

It belongs to the NrdR family. It depends on Zn(2+) as a cofactor.

Its function is as follows. Negatively regulates transcription of bacterial ribonucleotide reductase nrd genes and operons by binding to NrdR-boxes. The protein is Transcriptional repressor NrdR of Pelagibacter ubique (strain HTCC1062).